Consider the following 238-residue polypeptide: Uridylate kinase (238 aa).

Residue 12–15 (KLSG) coordinates ATP. Residue Gly-54 participates in UMP binding. 2 residues coordinate ATP: Gly-55 and Arg-59. UMP contacts are provided by residues Asp-74 and 135 to 142 (TGNPYFTT). Thr-162, Asn-163, Tyr-168, and Asp-171 together coordinate ATP.

The protein belongs to the UMP kinase family. Homohexamer.

Its subcellular location is the cytoplasm. It carries out the reaction UMP + ATP = UDP + ADP. It functions in the pathway pyrimidine metabolism; CTP biosynthesis via de novo pathway; UDP from UMP (UMPK route): step 1/1. Inhibited by UTP. Functionally, catalyzes the reversible phosphorylation of UMP to UDP. The sequence is that of Uridylate kinase from Bradyrhizobium sp. (strain BTAi1 / ATCC BAA-1182).